The chain runs to 204 residues: Nascent polypeptide-associated complex subunit alpha (204 aa).

Basic and acidic residues predominate over residues 1 to 19 (MADPRVEELPDEEVPKTNV). Disordered stretches follow at residues 1-48 (MADP…HSRN) and 119-167 (LAAA…GLEA). Residues 22–32 (AGSDSESEAGE) show a composition bias toward acidic residues. An NAC-A/B domain is found at 46 to 111 (SRNEKKARKA…AKIEDLNSQA (66 aa)). The span at 119 to 128 (LAAAEAAAGE) shows a compositional bias: low complexity. A compositionally biased stretch (basic and acidic residues) spans 129–151 (HAGHDHDHDHGKGKAPETEAKKE). Over residues 152–164 (EEEDDGEEVDETG) the composition is skewed to acidic residues. Residues 165–204 (LEAKDIELVMAQANVSRKKAVKALRENDNDIVNSIMALSI) enclose the UBA domain.

The protein belongs to the NAC-alpha family. Part of the nascent polypeptide-associated complex (NAC), consisting of egd2 and egd1. NAC associates with ribosomes via egd1.

Its subcellular location is the cytoplasm. The protein resides in the nucleus. Component of the nascent polypeptide-associated complex (NAC), a dynamic component of the ribosomal exit tunnel, protecting the emerging polypeptides from interaction with other cytoplasmic proteins to ensure appropriate nascent protein targeting. The NAC complex also promotes mitochondrial protein import by enhancing productive ribosome interactions with the outer mitochondrial membrane and blocks the inappropriate interaction of ribosomes translating non-secretory nascent polypeptides with translocation sites in the membrane of the endoplasmic reticulum. Egd2 may also be involved in transcription regulation. This chain is Nascent polypeptide-associated complex subunit alpha (egd2), found in Aspergillus clavatus (strain ATCC 1007 / CBS 513.65 / DSM 816 / NCTC 3887 / NRRL 1 / QM 1276 / 107).